Consider the following 199-residue polypeptide: Recombination protein RecR (199 aa).

Residues 57–72 (CERCNNLSEAPLCAVC) form a C4-type zinc finger. Residues 80–174 (SILCVVESPA…TISRIARGVP (95 aa)) enclose the Toprim domain.

Belongs to the RecR family.

In terms of biological role, may play a role in DNA repair. It seems to be involved in an RecBC-independent recombinational process of DNA repair. It may act with RecF and RecO. The polypeptide is Recombination protein RecR (Acidithiobacillus ferrooxidans (strain ATCC 23270 / DSM 14882 / CIP 104768 / NCIMB 8455) (Ferrobacillus ferrooxidans (strain ATCC 23270))).